The sequence spans 445 residues: UPF0210 protein SSU05_0296 (445 aa).

This sequence belongs to the UPF0210 family. In terms of assembly, homodimer.

The polypeptide is UPF0210 protein SSU05_0296 (Streptococcus suis (strain 05ZYH33)).